A 746-amino-acid polypeptide reads, in one-letter code: MSKILFCKSKVFLHPTSDARDNIAGFLLLTLEANKLSHQAILQYIPESGLSTLEISKLLKHEAKVGTCPTSTPFVIENSINFSNLVNTSLGQAFEISLSQIYCIQFRPPSPNGWYVGSLVIYPLTEQFTGFQPPVLFFHDQLCPSTTDKLKRLRKSMNPFDDSDELYWGGVDLRNKINELMELKKSNLEPEFWLVNPSLNDLRNFVSKDLLESYNNSKKDTTELATAGVKLNEKFQEWKWNVMSKIADVTTKSTNFIDSWLTNNSPIQKSQIDNEYLQKLLNNEKVKQIEQDYDSARVYLANWSLGVKQEAERYQKQNKLFDSYRNNIFNDLNLTDELSDTEINNALQRQFPLTEAKWNSLWDENDGRLRVTVNEVKDFIFHGGLENDSLRGKVWGFLLEIYPWDSSQDERVQIDQTLAAEYDQLKLTWSKDFLQFDDEDEEEYWNDQLFRISKDVRRCDRNLEIFQYNTIDGLPPPPQQLPANENNSTSPESANDESDDADDGVRNPHLIHLQNILITYNVYNTNLGYVQGMTDLLSPIYVIMKEEWKTFWCFTHFMDIMERNFLRDQSGIHEQMLTLVELVQLMLPELSEHLNKCDSGNLFFCFRMLLVWFKREFEMEDIMHIWENFWTFYYSSQFQLFFMLAILQKNSQAILQHLNQFDQILKFFNELNGKLDWNDLMVRAELLFKKFEKMMHVMERDLQNVSSSSSSSSTGVLPCQSERLTLLLSKKPIIRHEGQRSKNSVK.

Residues Ser265 and Ser339 each carry the phosphoserine modification. In terms of domain architecture, Rab-GAP TBC spans 385 to 633 (LENDSLRGKV…HIWENFWTFY (249 aa)). Residues 470-505 (TIDGLPPPPQQLPANENNSTSPESANDESDDADDGV) form a disordered region. Residues 481–491 (LPANENNSTSP) show a composition bias toward polar residues.

It is found in the cytoplasm. GTPase-activating protein (GAP) that most effectively accelerates the intrinsic GTPase activity of Ypt/Rab-type GTPase YPT7 involved in vacuole docking and fusion. It is also active, but to a lesser extent, on YPT31, YPT32, YPT1, YPT6 and SEC4. Provides a catalytic arginine (arginine finger) in trans to accelerate the GTP hydrolysis rate of the substrate GTPase. This chain is GTPase-activating protein GYP7 (GYP7), found in Saccharomyces cerevisiae (strain ATCC 204508 / S288c) (Baker's yeast).